The sequence spans 874 residues: Alanine--tRNA ligase (874 aa).

Zn(2+)-binding residues include His-562, His-566, Cys-665, and His-669.

Belongs to the class-II aminoacyl-tRNA synthetase family. It depends on Zn(2+) as a cofactor.

It localises to the cytoplasm. It carries out the reaction tRNA(Ala) + L-alanine + ATP = L-alanyl-tRNA(Ala) + AMP + diphosphate. Functionally, catalyzes the attachment of alanine to tRNA(Ala) in a two-step reaction: alanine is first activated by ATP to form Ala-AMP and then transferred to the acceptor end of tRNA(Ala). Also edits incorrectly charged Ser-tRNA(Ala) and Gly-tRNA(Ala) via its editing domain. This Pseudomonas putida (strain W619) protein is Alanine--tRNA ligase.